Consider the following 116-residue polypeptide: MIYTNNIFNFLTLFVSILIFLITTLITFAAHFLPSRNTDSEKSSPYECGFDPLNSARVPFSFRFFLVAILFLLFDLEIALLFPLPFSVFFHPIHTPLILTVGLIFEWVQGGLDWAE.

Helical transmembrane passes span 10-30 (FLTL…TFAA), 64-84 (FFLV…LFPL), and 88-108 (VFFH…FEWV).

This sequence belongs to the complex I subunit 3 family.

The protein localises to the mitochondrion membrane. The enzyme catalyses a ubiquinone + NADH + 5 H(+)(in) = a ubiquinol + NAD(+) + 4 H(+)(out). Core subunit of the mitochondrial membrane respiratory chain NADH dehydrogenase (Complex I) that is believed to belong to the minimal assembly required for catalysis. Complex I functions in the transfer of electrons from NADH to the respiratory chain. The immediate electron acceptor for the enzyme is believed to be ubiquinone. This chain is NADH-ubiquinone oxidoreductase chain 3 (ND3), found in Patiria pectinifera (Starfish).